The sequence spans 1033 residues: Calcium-transporting ATPase 12, plasma membrane-type (1033 aa).

M1 is modified (N-acetylmethionine). Over 1 to 152 (MRDLKEYDYS…NTYHKPPPKG (152 aa)) the chain is Cytoplasmic. Residues 25 to 36 (QRRWRFAYAAIY) form an interaction with calmodulin region. The residue at position 37 (S37) is a Phosphoserine. The chain crosses the membrane as a helical span at residues 153 to 173 (LLFFVYEAFKDLTILILLVCA). At 174–191 (IFSLGFGIKEHGIKEGWY) the chain is on the lumenal side. A helical transmembrane segment spans residues 192–212 (EGGSIFVAVFLVIVVSALSNF). Residues 213 to 341 (RQERQFDKLS…SERTPLQVRL (129 aa)) lie on the Cytoplasmic side of the membrane. A helical membrane pass occupies residues 342 to 361 (DTLTSTIGKIGLTVAALVLV). Topologically, residues 362–397 (VLLVRYFTGNTEKEGKREYNGSKTPVDTVVNSVVRI) are lumenal. The helical transmembrane segment at 398–415 (VAAAVTIVVVAIPEGLPL) threads the bilayer. At 416–806 (AVTLTLAYSM…KWGRCVYNNI (391 aa)) the chain is on the cytoplasmic side. Residue D453 is the 4-aspartylphosphate intermediate of the active site. Positions 751 and 755 each coordinate Mg(2+). Residues 807–825 (QKFIQFQLTVNVAALVINF) form a helical membrane-spanning segment. Residues 826–836 (IAAISAGEVPL) are Lumenal-facing. Residues 837 to 857 (TAVQLLWVNLIMDTLGALALA) traverse the membrane as a helical segment. Residues 858-877 (TERPTNELLKRKPVGRTEAL) lie on the Cytoplasmic side of the membrane. A helical transmembrane segment spans residues 878-900 (ITNVMWRNLLVQSLYQIAVLLIL). Residues 901–909 (QFKGMSIFS) are Lumenal-facing. The chain crosses the membrane as a helical span at residues 910–930 (VRKEVKDTLIFNTFVLCQVFN). The Cytoplasmic portion of the chain corresponds to 931-948 (EFNAREMEKKNVFKGLHR). The chain crosses the membrane as a helical span at residues 949 to 970 (NRLFIGIIAITIVLQVIMVEFL). Residues 971-980 (KKFADTVRLN) lie on the Lumenal side of the membrane. A helical transmembrane segment spans residues 981–1002 (GWQWGTCIALASLSWPIGFFTK). Over 1003–1006 (FIPV) the chain is Cytoplasmic.

Belongs to the cation transport ATPase (P-type) (TC 3.A.3) family. Type IIB subfamily.

Its subcellular location is the membrane. It catalyses the reaction Ca(2+)(in) + ATP + H2O = Ca(2+)(out) + ADP + phosphate + H(+). Activated by calmodulin. In terms of biological role, this magnesium-dependent enzyme catalyzes the hydrolysis of ATP coupled with the translocation of calcium from the cytosol out of the cell or into organelles. In Arabidopsis thaliana (Mouse-ear cress), this protein is Calcium-transporting ATPase 12, plasma membrane-type (ACA12).